Reading from the N-terminus, the 346-residue chain is Glucose-6-phosphatase 3 (346 aa).

At M1–N24 the chain is on the lumenal side. A helical membrane pass occupies residues V25–A45. The Cytoplasmic segment spans residues A46–G54. Residues I55 to L75 form a helical membrane-spanning segment. Over F76–P108 the chain is Lumenal. R79 serves as a coordination point for substrate. Residues G109 to V129 traverse the membrane as a helical segment. The Proton donor role is filled by H114. The Cytoplasmic segment spans residues S130–R140. A helical membrane pass occupies residues W141–V162. Position 161 (R161) interacts with substrate. The Lumenal portion of the chain corresponds to F163–H167. H167 serves as the catalytic Nucleophile. Residues F168 to M186 form a helical membrane-spanning segment. The Cytoplasmic portion of the chain corresponds to T187–S197. The helical transmembrane segment at F198–F218 threads the bilayer. Residues T219–D254 lie on the Lumenal side of the membrane. Residues S255–V273 traverse the membrane as a helical segment. Over R274–K283 the chain is Cytoplasmic. A helical transmembrane segment spans residues L284–P304. Topologically, residues Q305 to S307 are lumenal. The helical transmembrane segment at L308 to V328 threads the bilayer. Topologically, residues P329–S346 are cytoplasmic.

Belongs to the glucose-6-phosphatase family.

The protein localises to the endoplasmic reticulum membrane. It catalyses the reaction D-glucose 6-phosphate + H2O = D-glucose + phosphate. It functions in the pathway carbohydrate biosynthesis; gluconeogenesis. Inhibited by vanadate. Functionally, hydrolyzes glucose-6-phosphate to glucose in the endoplasmic reticulum. May form with the glucose-6-phosphate transporter (SLC37A4/G6PT) a ubiquitously expressed complex responsible for glucose production through glycogenolysis and gluconeogenesis. Probably required for normal neutrophil function. The protein is Glucose-6-phosphatase 3 (G6PC3) of Bos taurus (Bovine).